An 88-amino-acid chain; its full sequence is Large ribosomal subunit protein bL27 (88 aa).

The tract at residues 1–21 (MAHKKGASSSRNGRDSAAHRL) is disordered.

Belongs to the bacterial ribosomal protein bL27 family.

The chain is Large ribosomal subunit protein bL27 from Mycobacterium ulcerans (strain Agy99).